The sequence spans 145 residues: Actin-depolymerizing factor 11 (145 aa).

An ADF-H domain is found at 11–145; it reads SSGIGVAAEC…DIELLRERAH (135 aa).

This sequence belongs to the actin-binding proteins ADF family.

Functionally, actin-depolymerizing protein. Severs actin filaments (F-actin) and binds to actin monomers. In Oryza sativa subsp. japonica (Rice), this protein is Actin-depolymerizing factor 11 (ADF11).